The sequence spans 150 residues: Large ribosomal subunit protein bL9 (150 aa).

The protein belongs to the bacterial ribosomal protein bL9 family.

In terms of biological role, binds to the 23S rRNA. In Streptococcus gordonii (strain Challis / ATCC 35105 / BCRC 15272 / CH1 / DL1 / V288), this protein is Large ribosomal subunit protein bL9.